The primary structure comprises 217 residues: MSLVPGQHCSPSHTRLHLTSPITMGTEPATQNTEFSKGSLIYGVTSPQRGHSQHSEASQGPLSLDKPLQLPPIFLEGEKGESSVQNEQEGEPSLQSPSLELQSPAWPRHAGVAQEPLKVSSSYLSDTQSSESHVSSVQHPRPEEGSHASLSSGYAGDKEGSDISLVGSHRRVRLNRRLNTQAASNQTSQLGSIDPPSSLKSRLTGPAHSTKQTGGKE.

The segment at 1–217 (MSLVPGQHCS…HSTKQTGGKE (217 aa)) is disordered. Polar residues-rich tracts occupy residues 20–36 (SPIT…TEFS) and 45–61 (TSPQ…SQGP). 2 stretches are compositionally biased toward low complexity: residues 91 to 104 (EPSL…LQSP) and 128 to 139 (QSSESHVSSVQH). 2 stretches are compositionally biased toward polar residues: residues 177-191 (RLNT…SQLG) and 207-217 (AHSTKQTGGKE).

Preferentially expressed in teratocarcinoma rather than in normal testis.

The chain is Protein TNT (C16orf82) from Homo sapiens (Human).